Reading from the N-terminus, the 989-residue chain is Putative transcription elongation factor SPT5 homolog 2 (989 aa).

Acidic residues predominate over residues 1–26; sequence MSQYSDDDYSHEDDSEMEDEDEEDEY. Positions 1-82 are disordered; it reads MSQYSDDDYS…VEDDDDDVDV (82 aa). A compositionally biased stretch (basic residues) spans 31 to 42; sequence SRKGRSGKKRGR. Over residues 65-82 the composition is skewed to acidic residues; that stretch reads WEVEVDDDVEDDDDDVDV. 5 consecutive KOW domains span residues 260 to 287, 412 to 439, 464 to 491, 588 to 615, and 683 to 710; these read DLSR…VDNV, HFMK…VDEE, YFEP…VDQH, VVAV…IYKG, and DHLV…VKDK. Residues 790-852 form a disordered region; it reads MSPPRDNWED…SPMTPSSTSY (63 aa). Low complexity predominate over residues 842–852; the sequence is PSPMTPSSTSY. In terms of domain architecture, KOW 6 spans 936-963; the sequence is CPKKNERVKILGGKYCGSTAKVIGEDGQ.

Belongs to the SPT5 family.

The protein localises to the nucleus. In terms of biological role, may regulate transcription elongation by RNA polymerase II. May enhance transcriptional pausing at sites proximal to the promoter, which may in turn facilitate the assembly of an elongation competent RNA polymerase II complex. This Arabidopsis thaliana (Mouse-ear cress) protein is Putative transcription elongation factor SPT5 homolog 2.